The primary structure comprises 344 residues: Deoxyhypusine hydroxylase (344 aa).

2 HEAT-like PBS-type repeats span residues 81-107 (LKHELAYCLGQTANGAAIPYLTAVLED) and 115-140 (RHEAAEALGALGDVASLGVLKRFRDR). Positions 83, 84, 116, and 117 each coordinate Fe cation. Positions 169-188 (EKLRASDFSSVDPAPPTAQG) are disordered. HEAT-like PBS-type repeat units follow at residues 210-240 (KRYRAMFALRDLASPPDLPTAVPAVLALAKG), 248-274 (FRHEIAFVFGQLAHPASIPALTEALSN), and 281-308 (VRHEAAEALGSLGDEEGVEETLRKFLHD). Fe cation is bound by residues histidine 250, glutamate 251, histidine 283, and glutamate 284.

It belongs to the deoxyhypusine hydroxylase family. Fe(2+) is required as a cofactor.

It localises to the cytoplasm. Its subcellular location is the nucleus. The enzyme catalyses [eIF5A protein]-deoxyhypusine + AH2 + O2 = [eIF5A protein]-hypusine + A + H2O. Its pathway is protein modification; eIF5A hypusination. Catalyzes the hydroxylation of the N(6)-(4-aminobutyl)-L-lysine intermediate to form hypusine, an essential post-translational modification only found in mature eIF-5A factor. This chain is Deoxyhypusine hydroxylase, found in Chaetomium globosum (strain ATCC 6205 / CBS 148.51 / DSM 1962 / NBRC 6347 / NRRL 1970) (Soil fungus).